The primary structure comprises 431 residues: DNA polymerase delta subunit 2 (431 aa).

The protein belongs to the DNA polymerase delta/II small subunit family. As to quaternary structure, component of both the DNA polymerase delta and DNA polymerase zeta complexes. The DNA polymerase delta complex consisting of three subunits: the catalytic subunit PolD1 and two accessory subunits PolD2/Pol31 and PolD3/Pol32. Within the delta complex, interacts with both PolD1 and PolD3, and is able to interact with PolD1 in the absence of PolD3. Component of the DNA polymerase zeta complex consisting of four subunits: the catalytic subunit PolZ1 and three accessory subunits PolZ2/Rev7, PolD2/Pol31 and PolD3/Pol32. As to expression, expressed in ovaries and embryos (at the protein level).

The protein resides in the nucleus. Its subcellular location is the nucleoplasm. Functionally, accessory component of both the DNA polymerase delta complex and possibly the DNA polymerase zeta complex. As a component of the delta complex, participates in high fidelity genome replication, including lagging strand synthesis, DNA recombination and repair. Appears to promote the function of the DNA pol-delta complex accessory subunit PolD3 in both embryonic and postembryonic somatic cells. This is DNA polymerase delta subunit 2 from Drosophila melanogaster (Fruit fly).